The primary structure comprises 177 residues: ATP synthase subunit delta (177 aa).

The protein belongs to the ATPase delta chain family. In terms of assembly, F-type ATPases have 2 components, F(1) - the catalytic core - and F(0) - the membrane proton channel. F(1) has five subunits: alpha(3), beta(3), gamma(1), delta(1), epsilon(1). F(0) has three main subunits: a(1), b(2) and c(10-14). The alpha and beta chains form an alternating ring which encloses part of the gamma chain. F(1) is attached to F(0) by a central stalk formed by the gamma and epsilon chains, while a peripheral stalk is formed by the delta and b chains.

The protein localises to the cell inner membrane. In terms of biological role, f(1)F(0) ATP synthase produces ATP from ADP in the presence of a proton or sodium gradient. F-type ATPases consist of two structural domains, F(1) containing the extramembraneous catalytic core and F(0) containing the membrane proton channel, linked together by a central stalk and a peripheral stalk. During catalysis, ATP synthesis in the catalytic domain of F(1) is coupled via a rotary mechanism of the central stalk subunits to proton translocation. This protein is part of the stalk that links CF(0) to CF(1). It either transmits conformational changes from CF(0) to CF(1) or is implicated in proton conduction. This is ATP synthase subunit delta from Edwardsiella ictaluri (strain 93-146).